The chain runs to 461 residues: tRNA modification GTPase MnmE (461 aa).

Residues Arg27, Glu89, and Arg128 each contribute to the (6S)-5-formyl-5,6,7,8-tetrahydrofolate site. Positions 224 to 382 constitute a TrmE-type G domain; sequence GLATAIVGRP…LEELINKLFF (159 aa). Residue Asn234 coordinates K(+). Residues 234-239, 253-259, and 278-281 each bind GTP; these read NVGKSS, TDVAGTT, and DTAG. Mg(2+) is bound at residue Ser238. Residues Thr253, Val255, and Thr258 each contribute to the K(+) site. Thr259 serves as a coordination point for Mg(2+). Lys461 serves as a coordination point for (6S)-5-formyl-5,6,7,8-tetrahydrofolate.

Belongs to the TRAFAC class TrmE-Era-EngA-EngB-Septin-like GTPase superfamily. TrmE GTPase family. Homodimer. Heterotetramer of two MnmE and two MnmG subunits. K(+) is required as a cofactor.

It is found in the cytoplasm. Functionally, exhibits a very high intrinsic GTPase hydrolysis rate. Involved in the addition of a carboxymethylaminomethyl (cmnm) group at the wobble position (U34) of certain tRNAs, forming tRNA-cmnm(5)s(2)U34. The chain is tRNA modification GTPase MnmE from Lactobacillus helveticus (strain DPC 4571).